A 69-amino-acid chain; its full sequence is Neuropeptide-like protein 30 (69 aa).

Positions 1-22 are cleaved as a signal peptide; that stretch reads MISTSSILILVVLLACFMAASA. Residues Tyr-29, Tyr-39, Tyr-46, and Tyr-53 each carry the tyrosine amide modification. Residues Trp-58 and Trp-67 each carry the tryptophan amide modification.

It belongs to the YARP (YGGW-amide related peptide) family. As to expression, expressed in hypoderm.

It is found in the secreted. Its function is as follows. May have antimicrobial activity. May play a role in response to fungal infection. In Caenorhabditis elegans, this protein is Neuropeptide-like protein 30 (nlp-30).